The primary structure comprises 207 residues: Small ribosomal subunit protein uS4 (207 aa).

The tract at residues 31 to 54 (KCKLDSKPGQHGRTSGARTSDYGN) is disordered. The span at 42-53 (GRTSGARTSDYG) shows a compositional bias: polar residues. The region spanning 97–160 (SRLDNVVYRM…KKQVRIAEAL (64 aa)) is the S4 RNA-binding domain.

This sequence belongs to the universal ribosomal protein uS4 family. Part of the 30S ribosomal subunit. Contacts protein S5. The interaction surface between S4 and S5 is involved in control of translational fidelity.

In terms of biological role, one of the primary rRNA binding proteins, it binds directly to 16S rRNA where it nucleates assembly of the body of the 30S subunit. With S5 and S12 plays an important role in translational accuracy. The chain is Small ribosomal subunit protein uS4 from Cupriavidus metallidurans (strain ATCC 43123 / DSM 2839 / NBRC 102507 / CH34) (Ralstonia metallidurans).